The primary structure comprises 256 residues: Thiazole synthase (256 aa).

Catalysis depends on Lys-95, which acts as the Schiff-base intermediate with DXP. 1-deoxy-D-xylulose 5-phosphate contacts are provided by residues Gly-156, 182 to 183 (AG), and 204 to 205 (NT).

Belongs to the ThiG family. As to quaternary structure, homotetramer. Forms heterodimers with either ThiH or ThiS.

It is found in the cytoplasm. The catalysed reaction is [ThiS sulfur-carrier protein]-C-terminal-Gly-aminoethanethioate + 2-iminoacetate + 1-deoxy-D-xylulose 5-phosphate = [ThiS sulfur-carrier protein]-C-terminal Gly-Gly + 2-[(2R,5Z)-2-carboxy-4-methylthiazol-5(2H)-ylidene]ethyl phosphate + 2 H2O + H(+). The protein operates within cofactor biosynthesis; thiamine diphosphate biosynthesis. Functionally, catalyzes the rearrangement of 1-deoxy-D-xylulose 5-phosphate (DXP) to produce the thiazole phosphate moiety of thiamine. Sulfur is provided by the thiocarboxylate moiety of the carrier protein ThiS. In vitro, sulfur can be provided by H(2)S. The protein is Thiazole synthase of Enterobacter sp. (strain 638).